Consider the following 663-residue polypeptide: Epithelial sodium channel subunit gamma-2 (663 aa).

Over 1–55 the chain is Cytoplasmic; the sequence is MSNSGKKLTQKLKKNLPVTGPQAPTLYELMQWYCLNTNTHGCRRIVVSKGRLRRW. Residues 56–76 traverse the membrane as a helical segment; the sequence is IWIVLTLIAVALIFWQCALLL. The Extracellular portion of the chain corresponds to 77–544; it reads MTYYSVSASI…GGQLGLWMSC (468 aa). Cystine bridges form between cysteine 101/cysteine 286, cysteine 209/cysteine 217, cysteine 263/cysteine 270, cysteine 375/cysteine 460, cysteine 397/cysteine 456, cysteine 401/cysteine 452, cysteine 410/cysteine 437, and cysteine 412/cysteine 426. Residues 545-565 traverse the membrane as a helical segment; sequence SMVCGLEIVEVFFIDSFWVIL. At 566 to 663 the chain is on the cytoplasmic side; the sequence is RQKWHKLCNW…IDSDEDVERF (98 aa).

It belongs to the amiloride-sensitive sodium channel (TC 1.A.6) family. SCNN1G subfamily. As to quaternary structure, component of the heterotrimeric epithelial sodium channel (ENaC) composed of an alpha/SCNN1A, a beta/SCNN1B and a gamma/SCNN1G subunit.

The protein resides in the apical cell membrane. The catalysed reaction is Na(+)(in) = Na(+)(out). Originally identified and characterized by its inhibition by the diuretic drug amiloride. Its function is as follows. This is one of the three pore-forming subunits of the heterotrimeric epithelial sodium channel (ENaC), a critical regulator of sodium balance and fluid homeostasis. ENaC operates in epithelial tissues, where it mediates the electrodiffusion of sodium ions from extracellular fluid through the apical membrane of cells, with water following osmotically. This Xenopus laevis (African clawed frog) protein is Epithelial sodium channel subunit gamma-2 (scnn1g-b).